The chain runs to 186 residues: Ribosome-recycling factor (186 aa).

It belongs to the RRF family.

Its subcellular location is the cytoplasm. Functionally, responsible for the release of ribosomes from messenger RNA at the termination of protein biosynthesis. May increase the efficiency of translation by recycling ribosomes from one round of translation to another. The chain is Ribosome-recycling factor from Methylibium petroleiphilum (strain ATCC BAA-1232 / LMG 22953 / PM1).